Reading from the N-terminus, the 375-residue chain is Major DNA-binding protein (375 aa).

The protein belongs to the herpesviridae DNA-binding protein family.

It localises to the host nucleus. Functionally, single-stranded DNA-binding protein required for DNA replication. The polypeptide is Major DNA-binding protein (Equine herpesvirus 1 (strain HVS25A) (EHV-1)).